The primary structure comprises 192 residues: Zinc finger CCHC domain-containing protein 10 (192 aa).

The segment at 43-60 adopts a CCHC-type zinc-finger fold; the sequence is VRCQKCLEFGHWTYECTG. A disordered region spans residues 89–192; sequence QSIGETNVER…DEPPKKKKKK (104 aa). Low complexity-rich tracts occupy residues 109-136 and 144-179; these read TSSS…SSSS and SSSS…STDS.

This is Zinc finger CCHC domain-containing protein 10 (ZCCHC10) from Homo sapiens (Human).